Here is a 247-residue protein sequence, read N- to C-terminus: Geranylgeranylglyceryl phosphate synthase (247 aa).

Mg(2+)-binding residues include Asp23 and Ser52. Residues 171-177 (YLEAGSG), 203-204 (GG), and 225-226 (GT) contribute to the sn-glycerol 1-phosphate site.

The protein belongs to the GGGP/HepGP synthase family. Group II subfamily. It depends on Mg(2+) as a cofactor.

It is found in the cytoplasm. It catalyses the reaction sn-glycerol 1-phosphate + (2E,6E,10E)-geranylgeranyl diphosphate = sn-3-O-(geranylgeranyl)glycerol 1-phosphate + diphosphate. Its pathway is membrane lipid metabolism; glycerophospholipid metabolism. Its function is as follows. Prenyltransferase that catalyzes the transfer of the geranylgeranyl moiety of geranylgeranyl diphosphate (GGPP) to the C3 hydroxyl of sn-glycerol-1-phosphate (G1P). This reaction is the first ether-bond-formation step in the biosynthesis of archaeal membrane lipids. This Methanosarcina acetivorans (strain ATCC 35395 / DSM 2834 / JCM 12185 / C2A) protein is Geranylgeranylglyceryl phosphate synthase.